The sequence spans 107 residues: Putative protein RFPL3S (107 aa).

Strongly expressed in the testis and weakly in brain, placenta and pancreas.

The polypeptide is Putative protein RFPL3S (RFPL3S) (Homo sapiens (Human)).